We begin with the raw amino-acid sequence, 155 residues long: Protein SprT-like (155 aa).

The region spanning Gln7 to Thr145 is the SprT-like domain. Residue His67 participates in Zn(2+) binding. Glu68 is an active-site residue. His71 is a Zn(2+) binding site.

The protein belongs to the SprT family. Zn(2+) is required as a cofactor.

It localises to the cytoplasm. This Listeria monocytogenes serotype 4b (strain CLIP80459) protein is Protein SprT-like.